We begin with the raw amino-acid sequence, 68 residues long: ATP synthase subunit K, mitochondrial (68 aa).

Residues His-15–Pro-31 traverse the membrane as a helical segment.

This sequence belongs to the ATP19 family. As to quaternary structure, F-type ATPases have 2 components, CF(1) - the catalytic core - and CF(0) - the membrane proton channel. In yeast, the dimeric form of ATP synthase consists of 17 polypeptides: alpha, beta, gamma, delta, epsilon, 4 (B), 5 (OSCP), 6 (A), 8, 9 (C), d, E (Tim11), f, g, h, i/j and k.

The protein resides in the mitochondrion inner membrane. Its function is as follows. Mitochondrial membrane ATP synthase (F(1)F(0) ATP synthase or Complex V) produces ATP from ADP in the presence of a proton gradient across the membrane which is generated by electron transport complexes of the respiratory chain. F-type ATPases consist of two structural domains, F(1) - containing the extramembraneous catalytic core and F(0) - containing the membrane proton channel, linked together by a central stalk and a peripheral stalk. During catalysis, ATP synthesis in the catalytic domain of F(1) is coupled via a rotary mechanism of the central stalk subunits to proton translocation. Part of the complex F(0) domain. Minor subunit located with subunit a in the membrane. The K chain binds the dimeric form by interacting with the G and E chains. In Saccharomyces cerevisiae (strain ATCC 204508 / S288c) (Baker's yeast), this protein is ATP synthase subunit K, mitochondrial (ATP19).